Reading from the N-terminus, the 560-residue chain is Eukaryotic translation initiation factor 3 subunit D-1 (560 aa).

The interval valine 98 to serine 166 is disordered. Residues lysine 100–asparagine 121 are compositionally biased toward basic residues. Threonine 128 bears the Phosphothreonine mark. Positions glycine 147–histidine 156 are enriched in basic residues. The interval glutamate 291–proline 305 is RNA gate.

It belongs to the eIF-3 subunit D family. As to quaternary structure, component of the eukaryotic translation initiation factor 3 (eIF-3) complex. The eIF-3 complex interacts with pix.

It localises to the cytoplasm. MRNA cap-binding component of the eukaryotic translation initiation factor 3 (eIF-3) complex, which is involved in protein synthesis of a specialized repertoire of mRNAs and, together with other initiation factors, stimulates binding of mRNA and methionyl-tRNAi to the 40S ribosome. The eIF-3 complex specifically targets and initiates translation of a subset of mRNAs involved in cell proliferation. In the eIF-3 complex, eif3d specifically recognizes and binds the 7-methylguanosine cap of a subset of mRNAs. In Drosophila simulans (Fruit fly), this protein is Eukaryotic translation initiation factor 3 subunit D-1.